We begin with the raw amino-acid sequence, 232 residues long: Lipoprotein-releasing system ATP-binding protein LolD (232 aa).

In terms of domain architecture, ABC transporter spans 11–231; it reads VYLHDIKREY…SLENGHVVEL (221 aa). 47 to 54 serves as a coordination point for ATP; the sequence is APSGSGKS.

It belongs to the ABC transporter superfamily. Lipoprotein translocase (TC 3.A.1.125) family. The complex is composed of two ATP-binding proteins (LolD) and two transmembrane proteins (LolC and LolE).

It is found in the cell inner membrane. In terms of biological role, part of the ABC transporter complex LolCDE involved in the translocation of mature outer membrane-directed lipoproteins, from the inner membrane to the periplasmic chaperone, LolA. Responsible for the formation of the LolA-lipoprotein complex in an ATP-dependent manner. The sequence is that of Lipoprotein-releasing system ATP-binding protein LolD from Nitrobacter winogradskyi (strain ATCC 25391 / DSM 10237 / CIP 104748 / NCIMB 11846 / Nb-255).